The following is a 45-amino-acid chain: Photosystem I reaction center subunit IX 1 (45 aa).

The chain crosses the membrane as a helical span at residues 9–29; it reads WFRSAPVVATIWITLTAGIIV.

Belongs to the PsaJ family.

The protein resides in the cellular thylakoid membrane. In terms of biological role, may help in the organization of the PsaE and PsaF subunits. The sequence is that of Photosystem I reaction center subunit IX 1 from Prochlorococcus marinus (strain NATL1A).